The chain runs to 476 residues: DnaJ protein P58IPK homolog A (476 aa).

The signal sequence occupies residues 1–28; it reads MVAMARWPWRVLLPLLLLHSSPVFFVFA. 8 TPR repeats span residues 36–69, 70–103, 116–150, 152–184, 185–218, 231–264, 269–302, and 304–336; these read PSTLFKRALEMMNLRKYDGSLGLLNAVLEVEPNH, SEAYRQRASVLRHKCRYKEAEGDYSKYLELKPGS, AQNALESAYGQFESHDFSKVLDYINKIVLVFSPDC, KAKLLKAKALLALKDYSTVISETGFILKEDEDN, LDALLLRGRAYYYLADHDVASRHYQKGLRLDPEH, LVKKTKSAEDNAAKGKLRVSAEDYKASLAMDPDH, VHLYLGLCKVLVKLGRGKEAISSCTEALNIDGEL, and DALTQRGEAKLLTEDWEGAVQDLKEAAQKSPQD. One can recognise a J domain in the interval 357–423; that stretch reads DWYKILGISK…DKRVRYDRGE (67 aa).

As to quaternary structure, interacts with BIP1.

It localises to the endoplasmic reticulum lumen. Its function is as follows. May play a role in protein folding in the endoplasmic reticulum. The chain is DnaJ protein P58IPK homolog A from Oryza sativa subsp. japonica (Rice).